A 101-amino-acid polypeptide reads, in one-letter code: Anti-lipopolysaccharide factor (101 aa).

Cysteine 31 and cysteine 52 are oxidised to a cystine.

Binds tightly to LPS and thus specifically inhibits the LPS-mediated activation of the hemolymph coagulation. It has a strong antibacterial effect especially on the growth of Gram-negative bacteria. The sequence is that of Anti-lipopolysaccharide factor from Limulus polyphemus (Atlantic horseshoe crab).